An 802-amino-acid chain; its full sequence is MSELDRFSNDKNEMPKIPDVLPLLPVRDIILYPAMVLPLAVGREKSIKALEESMSTNRLVFIVTQKNIQIEDPTPKDVYNIGTICEVLQMLKMPDGTLKALVEGISRAQWTDFKLSDKGYIEVGLKVFDENTLKMPEVEAIMRQTIALFEQYVKLNPRIPIDISVSVSNIADPARLADTIASHLVIKNNDKQTILELVDPVKRLEKIIQILNAEIEILNIERRIQNRVRNQIEKTQKEYYLTEQMKAIQKELKQKDEAQKDLDDLKGKLKKTKMPQAAKSAADKEMSRLEKMMPMSPEATVIRTYLEWILDLPWEKSTIDNLDLNRAKEVLDQDHYGLEKVKDRVLEYLAVLSRVQKIKGPILCFIGPPGVGKTSIAKSVARSLGRNFVRISMGGVKDEAEIRGHRRTYIGSMPGKIIQSIKKAGSNNPVFILDEIDKIGSDWRGDPSSALLEVLDPEQNYTFNDHYLDVDFDLSNVMFITTANTLNNIPVTLFDRLELIRFSSYTDVEKRHIAEDFIVPKQLKEHGLKPEEFIFDDGALDIVIKNYTHEAGVRNLTREIANLCRKVVKGLEFNKELKSITIKPENLNKYLGIAYYERERIAENDVGVATGLAWTEVGGETLTIEVNKMGGKNSLVLTGKLGDVMKESAQAALTYVRSSSQKLKIDENMFSNTDFHVHVPEGAVPKDGPSAGIALATALASVCMNKPIKKKIAMTGEVTLRGRVLSIGGLKEKVLAAYREGITMILFPESNKKDLVDIPEDVIKKLQMIPVSHMDEVISLTIERLPENKNIKMDKRNGENGI.

Residues 21–215 form the Lon N-terminal domain; the sequence is LPLLPVRDII…KIIQILNAEI (195 aa). 367–374 lines the ATP pocket; that stretch reads GPPGVGKT. One can recognise a Lon proteolytic domain in the interval 603–784; the sequence is ENDVGVATGL…DEVISLTIER (182 aa). Residues serine 690 and lysine 733 contribute to the active site.

This sequence belongs to the peptidase S16 family. Homohexamer. Organized in a ring with a central cavity.

It is found in the cytoplasm. The catalysed reaction is Hydrolysis of proteins in presence of ATP.. Its function is as follows. ATP-dependent serine protease that mediates the selective degradation of mutant and abnormal proteins as well as certain short-lived regulatory proteins. Required for cellular homeostasis and for survival from DNA damage and developmental changes induced by stress. Degrades polypeptides processively to yield small peptide fragments that are 5 to 10 amino acids long. Binds to DNA in a double-stranded, site-specific manner. This is Lon protease from Endomicrobium trichonymphae.